The chain runs to 181 residues: Ribosome-recycling factor (181 aa).

Residues 135–160 (MDDIKKDKDMPEDDARKAEDQTQKLT) form a disordered region.

This sequence belongs to the RRF family.

The protein localises to the cytoplasm. In terms of biological role, responsible for the release of ribosomes from messenger RNA at the termination of protein biosynthesis. May increase the efficiency of translation by recycling ribosomes from one round of translation to another. In Leuconostoc mesenteroides subsp. mesenteroides (strain ATCC 8293 / DSM 20343 / BCRC 11652 / CCM 1803 / JCM 6124 / NCDO 523 / NBRC 100496 / NCIMB 8023 / NCTC 12954 / NRRL B-1118 / 37Y), this protein is Ribosome-recycling factor.